The chain runs to 258 residues: Putative phosphoenolpyruvate synthase regulatory protein (258 aa).

Gly146–Thr153 is a binding site for ADP.

It belongs to the pyruvate, phosphate/water dikinase regulatory protein family. PSRP subfamily.

The catalysed reaction is [pyruvate, water dikinase] + ADP = [pyruvate, water dikinase]-phosphate + AMP + H(+). It catalyses the reaction [pyruvate, water dikinase]-phosphate + phosphate + H(+) = [pyruvate, water dikinase] + diphosphate. Bifunctional serine/threonine kinase and phosphorylase involved in the regulation of the phosphoenolpyruvate synthase (PEPS) by catalyzing its phosphorylation/dephosphorylation. The chain is Putative phosphoenolpyruvate synthase regulatory protein from Thiobacillus denitrificans (strain ATCC 25259 / T1).